The primary structure comprises 279 residues: Lipid phosphate phosphatase epsilon 1, chloroplastic (279 aa).

The transit peptide at 1–88 directs the protein to the chloroplast; it reads MAASSSLLLL…SFINNSSEIR (88 aa). 5 consecutive transmembrane segments (helical) span residues 126-142, 164-184, 185-205, 219-239, and 255-275; these read LWAV…SVVL, SHAQ…MEWL, GTNG…SYFI, VVVG…MWNS, and VFLF…LNWF.

The protein belongs to the PA-phosphatase related phosphoesterase family. Expressed in root tips, root branch points, cotyledons and leaves.

It localises to the plastid. It is found in the chloroplast inner membrane. With respect to regulation, inhibited by Mg(2+). In terms of biological role, exhibits phosphatidate phosphatase (PAP) activity in vitro. May play a secondary role as PAP in plastids. This is Lipid phosphate phosphatase epsilon 1, chloroplastic (LPPE1) from Arabidopsis thaliana (Mouse-ear cress).